Reading from the N-terminus, the 277-residue chain is Large ribosomal subunit protein uL2 (277 aa).

The tract at residues 219–277 is disordered; sequence RPQTRGSAMNPVDHPHGGGEGKKNSGRHPVTPWGKPTKGAKTRRKKASDKLIISRRKGK. Residues 231–241 show a composition bias toward basic and acidic residues; the sequence is DHPHGGGEGKK. Residues 256 to 277 are compositionally biased toward basic residues; that stretch reads KGAKTRRKKASDKLIISRRKGK.

The protein belongs to the universal ribosomal protein uL2 family. As to quaternary structure, part of the 50S ribosomal subunit. Forms a bridge to the 30S subunit in the 70S ribosome.

Its function is as follows. One of the primary rRNA binding proteins. Required for association of the 30S and 50S subunits to form the 70S ribosome, for tRNA binding and peptide bond formation. It has been suggested to have peptidyltransferase activity; this is somewhat controversial. Makes several contacts with the 16S rRNA in the 70S ribosome. This is Large ribosomal subunit protein uL2 from Campylobacter concisus (strain 13826).